A 397-amino-acid chain; its full sequence is MHPYLTGNIPGTGGIFKETPEDFLVTEIPIYTPCGEGEHIYAEIEKRGITTLEAIRRLAKALGIGERDVGYAGMKDAKGITRQTISLPRVAPEQVLGLELPGIKVLSAVPHRNKLKVGHLRGNRFRIRIGGVGADAATIAIAVLDILEKRGVPNFFGEQRYGAQGNSHLIGGAILRNDYRGAVDALIGEPDKVTDERWRRAIEAFKAGDLAKSLETFPPHCRTERELLQKLVKQPEAHEKAFRAVHPRLRKLYLSAFQADLFDRVVQQRMDSLDQVVHGDVAFKHDNGACFLVTDAAAEAPRAAAFEISATGPMFGCRMKEPEGETLAMERRLLETEDLTLPSFDLEGGLRMEGERRPLRVPIAEIGVEADGAGLFLEFSLPKGSYATTVLREVMKS.

D76 acts as the Nucleophile in catalysis. Residues 151–361 form the TRUD domain; that stretch reads GVPNFFGEQR…MEGERRPLRV (211 aa).

It belongs to the pseudouridine synthase TruD family.

It carries out the reaction uridine(13) in tRNA = pseudouridine(13) in tRNA. In terms of biological role, responsible for synthesis of pseudouridine from uracil-13 in transfer RNAs. The polypeptide is tRNA pseudouridine synthase D (Geotalea daltonii (strain DSM 22248 / JCM 15807 / FRC-32) (Geobacter daltonii)).